A 338-amino-acid polypeptide reads, in one-letter code: uncharacterized protein (338 aa).

This is an uncharacterized protein from Schizosaccharomyces pombe (strain 972 / ATCC 24843) (Fission yeast).